We begin with the raw amino-acid sequence, 98 residues long: NADH-ubiquinone oxidoreductase chain 4L (98 aa).

The next 3 helical transmembrane spans lie at 1 to 21 (MTLI…GLLM), 29 to 49 (ALLC…LTIL), and 61 to 81 (IILL…LVMV).

This sequence belongs to the complex I subunit 4L family. Core subunit of respiratory chain NADH dehydrogenase (Complex I) which is composed of 45 different subunits.

Its subcellular location is the mitochondrion inner membrane. The enzyme catalyses a ubiquinone + NADH + 5 H(+)(in) = a ubiquinol + NAD(+) + 4 H(+)(out). In terms of biological role, core subunit of the mitochondrial membrane respiratory chain NADH dehydrogenase (Complex I) which catalyzes electron transfer from NADH through the respiratory chain, using ubiquinone as an electron acceptor. Part of the enzyme membrane arm which is embedded in the lipid bilayer and involved in proton translocation. The protein is NADH-ubiquinone oxidoreductase chain 4L (MT-ND4L) of Balaenoptera physalus (Fin whale).